A 159-amino-acid chain; its full sequence is Cyclic pyranopterin monophosphate synthase (159 aa).

Substrate contacts are provided by residues 76–78 and 114–115; these read MCH and ME. D129 is a catalytic residue.

Belongs to the MoaC family. In terms of assembly, homohexamer; trimer of dimers.

It carries out the reaction (8S)-3',8-cyclo-7,8-dihydroguanosine 5'-triphosphate = cyclic pyranopterin phosphate + diphosphate. It functions in the pathway cofactor biosynthesis; molybdopterin biosynthesis. Functionally, catalyzes the conversion of (8S)-3',8-cyclo-7,8-dihydroguanosine 5'-triphosphate to cyclic pyranopterin monophosphate (cPMP). The protein is Cyclic pyranopterin monophosphate synthase of Natranaerobius thermophilus (strain ATCC BAA-1301 / DSM 18059 / JW/NM-WN-LF).